The sequence spans 380 residues: Probable inorganic pyrophosphatase (380 aa).

Mg(2+)-binding residues include D198, D203, and D235.

This sequence belongs to the PPase family. Mg(2+) is required as a cofactor.

It catalyses the reaction diphosphate + H2O = 2 phosphate + H(+). This Plasmodium falciparum (isolate 3D7) protein is Probable inorganic pyrophosphatase.